The chain runs to 193 residues: MYHDLIRSELNEAADTLANFLKDDSNIDAIQRAAILLADSFKAGGKVLSCGNGGSHCDAMHFAEELTGRYRENRPGYPAIAISDVSHLSCVSNDFGYDYVFSRYVEAVDREGDVLLGISTSGNSGNIIKAIEAARAKGMKVITLTGKDGGKMAGSADIEIRVPHFGYADRIQEIHIKVIHILIQLIEKEMVKA.

The region spanning 37-193 (LADSFKAGGK…QLIEKEMVKA (157 aa)) is the SIS domain. Residue 52 to 54 (NGG) coordinates substrate. Residues H61 and E65 each coordinate Zn(2+). Substrate is bound by residues E65, 93-94 (ND), 119-121 (STS), S124, and Q172. Residues Q172 and H180 each coordinate Zn(2+).

The protein belongs to the SIS family. GmhA subfamily. Homotetramer. Zn(2+) serves as cofactor.

It localises to the cytoplasm. The enzyme catalyses 2 D-sedoheptulose 7-phosphate = D-glycero-alpha-D-manno-heptose 7-phosphate + D-glycero-beta-D-manno-heptose 7-phosphate. It participates in carbohydrate biosynthesis; D-glycero-D-manno-heptose 7-phosphate biosynthesis; D-glycero-alpha-D-manno-heptose 7-phosphate and D-glycero-beta-D-manno-heptose 7-phosphate from sedoheptulose 7-phosphate: step 1/1. Its pathway is bacterial outer membrane biogenesis; LPS core biosynthesis. Catalyzes the isomerization of sedoheptulose 7-phosphate in D-glycero-D-manno-heptose 7-phosphate. This chain is Phosphoheptose isomerase, found in Yersinia pestis.